The sequence spans 205 residues: Ribosomal RNA large subunit methyltransferase E (205 aa).

S-adenosyl-L-methionine-binding residues include Gly60, Trp62, Asp80, Asp96, and Asp121. The active-site Proton acceptor is Lys161.

The protein belongs to the class I-like SAM-binding methyltransferase superfamily. RNA methyltransferase RlmE family.

The protein localises to the cytoplasm. It carries out the reaction uridine(2552) in 23S rRNA + S-adenosyl-L-methionine = 2'-O-methyluridine(2552) in 23S rRNA + S-adenosyl-L-homocysteine + H(+). Functionally, specifically methylates the uridine in position 2552 of 23S rRNA at the 2'-O position of the ribose in the fully assembled 50S ribosomal subunit. In Dechloromonas aromatica (strain RCB), this protein is Ribosomal RNA large subunit methyltransferase E.